The chain runs to 155 residues: 6,7-dimethyl-8-ribityllumazine synthase (155 aa).

Residues Phe26, 60–62, and 84–86 each bind 5-amino-6-(D-ribitylamino)uracil; these read ALE and AVI. 89–90 serves as a coordination point for (2S)-2-hydroxy-3-oxobutyl phosphate; that stretch reads ET. Catalysis depends on His92, which acts as the Proton donor. Residue Asn117 participates in 5-amino-6-(D-ribitylamino)uracil binding. (2S)-2-hydroxy-3-oxobutyl phosphate is bound at residue Arg131.

Belongs to the DMRL synthase family.

It carries out the reaction (2S)-2-hydroxy-3-oxobutyl phosphate + 5-amino-6-(D-ribitylamino)uracil = 6,7-dimethyl-8-(1-D-ribityl)lumazine + phosphate + 2 H2O + H(+). The protein operates within cofactor biosynthesis; riboflavin biosynthesis; riboflavin from 2-hydroxy-3-oxobutyl phosphate and 5-amino-6-(D-ribitylamino)uracil: step 1/2. Its function is as follows. Catalyzes the formation of 6,7-dimethyl-8-ribityllumazine by condensation of 5-amino-6-(D-ribitylamino)uracil with 3,4-dihydroxy-2-butanone 4-phosphate. This is the penultimate step in the biosynthesis of riboflavin. This is 6,7-dimethyl-8-ribityllumazine synthase from Chromobacterium violaceum (strain ATCC 12472 / DSM 30191 / JCM 1249 / CCUG 213 / NBRC 12614 / NCIMB 9131 / NCTC 9757 / MK).